We begin with the raw amino-acid sequence, 131 residues long: Profilin-4 (131 aa).

It belongs to the profilin family. Occurs in many kinds of cells as a complex with monomeric actin in a 1:1 ratio.

The protein resides in the cytoplasm. The protein localises to the cytoskeleton. Its function is as follows. Binds to actin and affects the structure of the cytoskeleton. At high concentrations, profilin prevents the polymerization of actin, whereas it enhances it at low concentrations. By binding to PIP2, it inhibits the formation of IP3 and DG. In Hevea brasiliensis (Para rubber tree), this protein is Profilin-4.